A 102-amino-acid chain; its full sequence is Sulfur globule protein CV3 (102 aa).

Residues 1 to 25 (MTMKRLLLVSTLAGASALATLPANA) form the signal peptide.

As to quaternary structure, the protein envelope of the sulfur globules is composed of the three different proteins CV1, CV2 and CV3.

Its function is as follows. Structural protein of the sulfur globules, which are intracellular globules that serve for sulfur storage in purple sulfur bacteria. The sequence is that of Sulfur globule protein CV3 (sgpC) from Allochromatium vinosum (strain ATCC 17899 / DSM 180 / NBRC 103801 / NCIMB 10441 / D) (Chromatium vinosum).